The sequence spans 381 residues: tRNA pseudouridine synthase Pus10 (381 aa).

Aspartate 226 (nucleophile) is an active-site residue.

This sequence belongs to the pseudouridine synthase Pus10 family.

It catalyses the reaction uridine(54) in tRNA = pseudouridine(54) in tRNA. The enzyme catalyses uridine(55) in tRNA = pseudouridine(55) in tRNA. Responsible for synthesis of pseudouridine from uracil-54 and uracil-55 in the psi GC loop of transfer RNAs. The polypeptide is tRNA pseudouridine synthase Pus10 (Nitrosopumilus maritimus (strain SCM1)).